The sequence spans 458 residues: cAMP-dependent protein kinase regulatory subunit (458 aa).

Residues 28–222 (QFAANYFNKK…GLESAVGKNF (195 aa)) form a dimerization and phosphorylation region. Ser184 is subject to Phosphoserine. Residues 223 to 338 (LFNK…FLKS), Glu288, Arg297, 341 to 457 (LLKS…RADK), Glu407, and Arg416 each bind 3',5'-cyclic AMP.

It belongs to the cAMP-dependent kinase regulatory chain family. In terms of assembly, tetramer, composed of 2 regulatory (R) and 2 catalytic (C) subunits. In the presence of cAMP it dissociates into 2 active monomeric C subunits and an R dimer.

In Eremothecium gossypii (strain ATCC 10895 / CBS 109.51 / FGSC 9923 / NRRL Y-1056) (Yeast), this protein is cAMP-dependent protein kinase regulatory subunit (PKAR).